A 950-amino-acid chain; its full sequence is UvrABC system protein A (950 aa).

36 to 43 contacts ATP; the sequence is GKSGSGKS. The segment at 260 to 287 adopts a C4-type zinc-finger fold; sequence CPLCGFSLPLIEPRLFSFNSPFGACSEC. 2 ABC transporter domains span residues 317 to 599 and 619 to 947; these read FKTS…KNSL and ADKG…MFLK. ATP is bound at residue 651-658; sequence GVSGSGKS. The C4-type zinc-finger motif lies at 750–776; sequence CEKCQGDGYLNIQMHFLPDVFVPCDLC.

It belongs to the ABC transporter superfamily. UvrA family. In terms of assembly, forms a heterotetramer with UvrB during the search for lesions.

The protein localises to the cytoplasm. Functionally, the UvrABC repair system catalyzes the recognition and processing of DNA lesions. UvrA is an ATPase and a DNA-binding protein. A damage recognition complex composed of 2 UvrA and 2 UvrB subunits scans DNA for abnormalities. When the presence of a lesion has been verified by UvrB, the UvrA molecules dissociate. This chain is UvrABC system protein A, found in Borreliella burgdorferi (strain ATCC 35210 / DSM 4680 / CIP 102532 / B31) (Borrelia burgdorferi).